A 934-amino-acid polypeptide reads, in one-letter code: Glycine dehydrogenase (decarboxylating) (934 aa).

Lys687 bears the N6-(pyridoxal phosphate)lysine mark.

The protein belongs to the GcvP family. As to quaternary structure, the glycine cleavage system is composed of four proteins: P, T, L and H. Pyridoxal 5'-phosphate serves as cofactor.

The catalysed reaction is N(6)-[(R)-lipoyl]-L-lysyl-[glycine-cleavage complex H protein] + glycine + H(+) = N(6)-[(R)-S(8)-aminomethyldihydrolipoyl]-L-lysyl-[glycine-cleavage complex H protein] + CO2. The glycine cleavage system catalyzes the degradation of glycine. The P protein binds the alpha-amino group of glycine through its pyridoxal phosphate cofactor; CO(2) is released and the remaining methylamine moiety is then transferred to the lipoamide cofactor of the H protein. This Nocardia farcinica (strain IFM 10152) protein is Glycine dehydrogenase (decarboxylating).